Reading from the N-terminus, the 517-residue chain is Variant surface glycoprotein MVAT5 (517 aa).

Residues 1–21 form the signal peptide; that stretch reads MIGKAFIILSLLNELPTPTAA. Intrachain disulfides connect cysteine 417-cysteine 430 and cysteine 426-cysteine 443. An N-linked (GlcNAc...) asparagine glycan is attached at asparagine 435. Residues 454 to 470 show a composition bias toward low complexity; that stretch reads QAAQTAGAGEGAAGTTT. Positions 454–487 are disordered; that stretch reads QAAQTAGAGEGAAGTTTDKCKDKKKDDCKSPDCK. The span at 471 to 487 shows a compositional bias: basic and acidic residues; it reads DKCKDKKKDDCKSPDCK. The GPI-anchor amidated aspartate moiety is linked to residue aspartate 495. A propeptide spans 496-517 (removed in mature form); it reads SSILLNKQFALMVSAAFVALLF.

It is found in the cell membrane. VSG forms a coat on the surface of the parasite. The trypanosome evades the immune response of the host by expressing a series of antigenically distinct VSGs from an estimated 1000 VSG genes. This Trypanosoma brucei rhodesiense protein is Variant surface glycoprotein MVAT5.